The chain runs to 527 residues: GMP synthase [glutamine-hydrolyzing] (527 aa).

The 199-residue stretch at 4–202 (KILILDFGSQ…VLQICGARAD (199 aa)) folds into the Glutamine amidotransferase type-1 domain. Cys-81 functions as the Nucleophile in the catalytic mechanism. Catalysis depends on residues His-176 and Glu-178. A GMPS ATP-PPase domain is found at 203–395 (WEMGNYIDEA…LGLPPAMVYR (193 aa)). 230 to 236 (SGGVDSS) serves as a coordination point for ATP.

Homodimer.

The enzyme catalyses XMP + L-glutamine + ATP + H2O = GMP + L-glutamate + AMP + diphosphate + 2 H(+). Its pathway is purine metabolism; GMP biosynthesis; GMP from XMP (L-Gln route): step 1/1. In terms of biological role, catalyzes the synthesis of GMP from XMP. In Paraburkholderia phytofirmans (strain DSM 17436 / LMG 22146 / PsJN) (Burkholderia phytofirmans), this protein is GMP synthase [glutamine-hydrolyzing].